The following is a 405-amino-acid chain: Putative polysaccharide ligase RT0347 (405 aa).

A run of 10 helical transmembrane segments spans residues 23 to 43 (IAAT…ISFI), 77 to 97 (LFIA…NSLV), 120 to 140 (ILYL…LFFI), 156 to 178 (FGLY…VIII), 201 to 221 (ISDS…FILA), 227 to 247 (IFFK…PIIA), 270 to 290 (LFIW…GYGF), 322 to 342 (ILQI…CLVY), 353 to 375 (ISNF…MISY), and 377 to 397 (IWQT…KLLV).

Belongs to the O-antigen ligase family.

It localises to the membrane. The polypeptide is Putative polysaccharide ligase RT0347 (Rickettsia typhi (strain ATCC VR-144 / Wilmington)).